The chain runs to 424 residues: Histidine--tRNA ligase (424 aa).

Belongs to the class-II aminoacyl-tRNA synthetase family. In terms of assembly, homodimer.

The protein localises to the cytoplasm. It catalyses the reaction tRNA(His) + L-histidine + ATP = L-histidyl-tRNA(His) + AMP + diphosphate + H(+). The protein is Histidine--tRNA ligase of Klebsiella pneumoniae (strain 342).